The sequence spans 123 residues: Ribosome-binding factor A (123 aa).

This sequence belongs to the RbfA family. Monomer. Binds 30S ribosomal subunits, but not 50S ribosomal subunits or 70S ribosomes.

It is found in the cytoplasm. Functionally, one of several proteins that assist in the late maturation steps of the functional core of the 30S ribosomal subunit. Associates with free 30S ribosomal subunits (but not with 30S subunits that are part of 70S ribosomes or polysomes). Required for efficient processing of 16S rRNA. May interact with the 5'-terminal helix region of 16S rRNA. This Lactobacillus johnsonii (strain CNCM I-12250 / La1 / NCC 533) protein is Ribosome-binding factor A.